The chain runs to 376 residues: MTVSKFVQIRRDLHRIPEIGFKEWKTQQYILDYIGTLSHEFVEVKTWKTGVIVKVNGKNPEKIIGYRADIDGLPITEETGYEFASIHEGMMHACGHDVHTTIGLGLLTKAVSERIDDDLVFLFQPAEEGPGGALPMLESEELKEWKPNIILGLHIAPEYAVGTIATKEGLLFANTSELYIDLKGKGGHAAYPHTANDMIVAASHLVTQLQSVISRNVNPLDSAVITIGKITGGTVQNIIAEKSRLEGTIRTLSVESMKRVKSRIESIVAGIEASFQCEAIIDYGAMYHQVYNHEELTREFMEFVHKQTDMNVITCTEAMTGEDFGYMLREIPGFMFWLGVNSEYGLHHAKLKPDEEVIEKAITFLSQYVKWKGNRK.

The active site involves Asp69. Catalysis depends on Glu128, which acts as the Proton acceptor.

This sequence belongs to the peptidase M20A family. N-acetyldiaminopimelate deacetylase subfamily.

The catalysed reaction is N-acetyl-(2S,6S)-2,6-diaminopimelate + H2O = (2S,6S)-2,6-diaminopimelate + acetate. It functions in the pathway amino-acid biosynthesis; L-lysine biosynthesis via DAP pathway; LL-2,6-diaminopimelate from (S)-tetrahydrodipicolinate (acetylase route): step 3/3. Catalyzes the conversion of N-acetyl-diaminopimelate to diaminopimelate and acetate. The sequence is that of N-acetyldiaminopimelate deacetylase from Bacillus cereus (strain B4264).